The following is a 93-amino-acid chain: uncharacterized protein (93 aa).

To B.subtilis YdcN C-terminal region.

This is an uncharacterized protein from Methanocaldococcus jannaschii (strain ATCC 43067 / DSM 2661 / JAL-1 / JCM 10045 / NBRC 100440) (Methanococcus jannaschii).